Reading from the N-terminus, the 163-residue chain is Epididymal-specific lipocalin-6 (163 aa).

The signal sequence occupies residues 1-20 (MGGLLLAAFLALVSVPRAQA).

Belongs to the calycin superfamily. Lipocalin family. As to expression, predominantly expressed in epididymis.

The protein resides in the secreted. In terms of biological role, may play a role in male fertility. In Homo sapiens (Human), this protein is Epididymal-specific lipocalin-6 (LCN6).